Here is a 240-residue protein sequence, read N- to C-terminus: DNA repair protein RecO (240 aa).

This sequence belongs to the RecO family.

Its function is as follows. Involved in DNA repair and RecF pathway recombination. This Pseudoalteromonas atlantica (strain T6c / ATCC BAA-1087) protein is DNA repair protein RecO.